The chain runs to 93 residues: Small ribosomal subunit protein uS19 (93 aa).

Belongs to the universal ribosomal protein uS19 family.

Its function is as follows. Protein S19 forms a complex with S13 that binds strongly to the 16S ribosomal RNA. In Thermoanaerobacter pseudethanolicus (strain ATCC 33223 / 39E) (Clostridium thermohydrosulfuricum), this protein is Small ribosomal subunit protein uS19.